The sequence spans 357 residues: Glycerol-3-phosphate dehydrogenase [NAD(P)+] (357 aa).

NADPH is bound by residues Ser30, Phe31, Arg51, and Lys124. 2 residues coordinate sn-glycerol 3-phosphate: Lys124 and Gly152. Ala156 is an NADPH binding site. Sn-glycerol 3-phosphate-binding residues include Lys207, Asp260, Ser270, Arg271, and Asn272. Lys207 functions as the Proton acceptor in the catalytic mechanism. Arg271 provides a ligand contact to NADPH. Glu297 serves as a coordination point for NADPH.

The protein belongs to the NAD-dependent glycerol-3-phosphate dehydrogenase family.

It localises to the cytoplasm. It carries out the reaction sn-glycerol 3-phosphate + NAD(+) = dihydroxyacetone phosphate + NADH + H(+). The catalysed reaction is sn-glycerol 3-phosphate + NADP(+) = dihydroxyacetone phosphate + NADPH + H(+). Its pathway is membrane lipid metabolism; glycerophospholipid metabolism. In terms of biological role, catalyzes the reduction of the glycolytic intermediate dihydroxyacetone phosphate (DHAP) to sn-glycerol 3-phosphate (G3P), the key precursor for phospholipid synthesis. In Acinetobacter baylyi (strain ATCC 33305 / BD413 / ADP1), this protein is Glycerol-3-phosphate dehydrogenase [NAD(P)+].